Consider the following 132-residue polypeptide: Ribosome-binding factor A (132 aa).

Belongs to the RbfA family. In terms of assembly, monomer. Binds 30S ribosomal subunits, but not 50S ribosomal subunits or 70S ribosomes.

The protein localises to the cytoplasm. Its function is as follows. One of several proteins that assist in the late maturation steps of the functional core of the 30S ribosomal subunit. Associates with free 30S ribosomal subunits (but not with 30S subunits that are part of 70S ribosomes or polysomes). Required for efficient processing of 16S rRNA. May interact with the 5'-terminal helix region of 16S rRNA. The polypeptide is Ribosome-binding factor A (Prochlorococcus marinus subsp. pastoris (strain CCMP1986 / NIES-2087 / MED4)).